Consider the following 504-residue polypeptide: Maturase K (504 aa).

It belongs to the intron maturase 2 family. MatK subfamily.

Its subcellular location is the plastid. The protein resides in the chloroplast. Functionally, usually encoded in the trnK tRNA gene intron. Probably assists in splicing its own and other chloroplast group II introns. This chain is Maturase K, found in Arabidopsis thaliana (Mouse-ear cress).